A 74-amino-acid chain; its full sequence is uncharacterized protein (74 aa).

This is an uncharacterized protein from Rickettsia conorii (strain ATCC VR-613 / Malish 7).